The sequence spans 2325 residues: Protein Ycf2 (2325 aa).

Disordered regions lie at residues 168–189 (SSQLKGSSDQSRDHFDSIGTED), 221–251 (TEIESDRFSKGLSGSSSKSRLFTEGEKEMNN), and 947–1006 (KRKK…KRKE). Over residues 230–240 (KGLSGSSSKSR) the composition is skewed to low complexity. 2 stretches are compositionally biased toward basic and acidic residues: residues 241–250 (LFTEGEKEMN) and 955–1004 (KRKE…PEKR). An ATP-binding site is contributed by 1436–1443 (GSIGSGRS). Disordered stretches follow at residues 1510-1529 (YEDRDSDDYDEPGASDDYEP), 1855-1996 (LVGS…LLRP), and 2063-2179 (PAEE…DGFS). Residues 1861–1976 (TEEEVEGTEE…VEGTEDEEGE (116 aa)) are compositionally biased toward acidic residues. The segment covering 1977–1989 (GTEKDSSQFDNDR) has biased composition (basic and acidic residues). Composition is skewed to acidic residues over residues 2063–2080 (PAEEIPEEEDPLPEEALE) and 2087–2162 (GEEE…ENDS).

This sequence belongs to the Ycf2 family.

Its subcellular location is the plastid. The protein resides in the chloroplast stroma. In terms of biological role, probable ATPase of unknown function. Its presence in a non-photosynthetic plant (Epifagus virginiana) and experiments in tobacco indicate that it has an essential function which is probably not related to photosynthesis. This is Protein Ycf2 from Oenothera biennis (German evening primrose).